A 155-amino-acid chain; its full sequence is 6,7-dimethyl-8-ribityllumazine synthase (155 aa).

Residues Phe-22, 56-58 (AFE), and 80-82 (AVI) each bind 5-amino-6-(D-ribitylamino)uracil. 85–86 (AT) serves as a coordination point for (2S)-2-hydroxy-3-oxobutyl phosphate. His-88 functions as the Proton donor in the catalytic mechanism. Phe-113 is a 5-amino-6-(D-ribitylamino)uracil binding site. Position 127 (Arg-127) interacts with (2S)-2-hydroxy-3-oxobutyl phosphate.

The protein belongs to the DMRL synthase family.

It carries out the reaction (2S)-2-hydroxy-3-oxobutyl phosphate + 5-amino-6-(D-ribitylamino)uracil = 6,7-dimethyl-8-(1-D-ribityl)lumazine + phosphate + 2 H2O + H(+). The protein operates within cofactor biosynthesis; riboflavin biosynthesis; riboflavin from 2-hydroxy-3-oxobutyl phosphate and 5-amino-6-(D-ribitylamino)uracil: step 1/2. Functionally, catalyzes the formation of 6,7-dimethyl-8-ribityllumazine by condensation of 5-amino-6-(D-ribitylamino)uracil with 3,4-dihydroxy-2-butanone 4-phosphate. This is the penultimate step in the biosynthesis of riboflavin. This Clostridium acetobutylicum (strain ATCC 824 / DSM 792 / JCM 1419 / IAM 19013 / LMG 5710 / NBRC 13948 / NRRL B-527 / VKM B-1787 / 2291 / W) protein is 6,7-dimethyl-8-ribityllumazine synthase.